Here is a 301-residue protein sequence, read N- to C-terminus: Probable alpha-L-glutamate ligase 2 (301 aa).

An ATP-grasp domain is found at 104–287 (LQLLSRKSIG…VADKIIQFIE (184 aa)). Residues lysine 141, 178-179 (EY), aspartate 187, and 211-213 (RSN) contribute to the ATP site. The Mg(2+) site is built by aspartate 248, glutamate 260, and asparagine 262. Positions 248, 260, and 262 each coordinate Mn(2+).

The protein belongs to the RimK family. It depends on Mg(2+) as a cofactor. The cofactor is Mn(2+).

In Shewanella denitrificans (strain OS217 / ATCC BAA-1090 / DSM 15013), this protein is Probable alpha-L-glutamate ligase 2.